The sequence spans 213 residues: Urease accessory protein UreG (213 aa).

Position 14 to 21 (14 to 21) interacts with GTP; it reads GPVGSGKT.

This sequence belongs to the SIMIBI class G3E GTPase family. UreG subfamily. As to quaternary structure, homodimer. UreD, UreF and UreG form a complex that acts as a GTP-hydrolysis-dependent molecular chaperone, activating the urease apoprotein by helping to assemble the nickel containing metallocenter of UreC. The UreE protein probably delivers the nickel.

Its subcellular location is the cytoplasm. Its function is as follows. Facilitates the functional incorporation of the urease nickel metallocenter. This process requires GTP hydrolysis, probably effectuated by UreG. In Mesorhizobium japonicum (strain LMG 29417 / CECT 9101 / MAFF 303099) (Mesorhizobium loti (strain MAFF 303099)), this protein is Urease accessory protein UreG.